The primary structure comprises 287 residues: Acetylglutamate kinase (287 aa).

Residues 70–71, arginine 92, and asparagine 184 each bind substrate; that span reads GG.

It belongs to the acetylglutamate kinase family. ArgB subfamily.

It is found in the cytoplasm. It catalyses the reaction N-acetyl-L-glutamate + ATP = N-acetyl-L-glutamyl 5-phosphate + ADP. Its pathway is amino-acid biosynthesis; L-arginine biosynthesis; N(2)-acetyl-L-ornithine from L-glutamate: step 2/4. Catalyzes the ATP-dependent phosphorylation of N-acetyl-L-glutamate. This Ruegeria pomeroyi (strain ATCC 700808 / DSM 15171 / DSS-3) (Silicibacter pomeroyi) protein is Acetylglutamate kinase.